Reading from the N-terminus, the 310-residue chain is Cysteine synthase (310 aa).

Lys-46 carries the post-translational modification N6-(pyridoxal phosphate)lysine. Pyridoxal 5'-phosphate is bound by residues Asn-76, 180-184 (GTGGT), and Ser-268.

It belongs to the cysteine synthase/cystathionine beta-synthase family. Homodimer. Pyridoxal 5'-phosphate is required as a cofactor.

It carries out the reaction O-acetyl-L-serine + hydrogen sulfide = L-cysteine + acetate. The protein operates within amino-acid biosynthesis; L-cysteine biosynthesis; L-cysteine from L-serine: step 2/2. This is Cysteine synthase (cysK) from Staphylococcus epidermidis (strain ATCC 35984 / DSM 28319 / BCRC 17069 / CCUG 31568 / BM 3577 / RP62A).